Here is a 365-residue protein sequence, read N- to C-terminus: Flagellar P-ring protein (365 aa).

The first 19 residues, 1-19 (MIKFLSTFMLLLVTTVVQA), serve as a signal peptide directing secretion.

Belongs to the FlgI family. As to quaternary structure, the basal body constitutes a major portion of the flagellar organelle and consists of four rings (L,P,S, and M) mounted on a central rod.

The protein resides in the periplasm. Its subcellular location is the bacterial flagellum basal body. Its function is as follows. Assembles around the rod to form the L-ring and probably protects the motor/basal body from shearing forces during rotation. The protein is Flagellar P-ring protein of Escherichia fergusonii (strain ATCC 35469 / DSM 13698 / CCUG 18766 / IAM 14443 / JCM 21226 / LMG 7866 / NBRC 102419 / NCTC 12128 / CDC 0568-73).